The primary structure comprises 80 residues: Homeobox protein 7 (80 aa).

Positions 8 to 67 (SNIRNIRSSGISTKKLEDFFSINQYPNKNEIKDFANYYQCDETKIKNWFKGKRDRLKKKS) form a DNA-binding region, homeobox. The segment at 60-80 (RDRLKKKSSNNEKSGNKFYFK) is disordered. A compositionally biased stretch (low complexity) spans 70–80 (NEKSGNKFYFK).

It localises to the nucleus. Its function is as follows. Putative transcription factor. The chain is Homeobox protein 7 (hbx7) from Dictyostelium discoideum (Social amoeba).